Here is a 236-residue protein sequence, read N- to C-terminus: Cancer/testis antigen 55 (236 aa).

The segment at 57 to 84 (RSSADVETGDNPLKAEPNLPAAVEEQSP) is disordered.

Interacts with GABARAP; this interaction may be important for GABARAP protein stability. Interacts with LAMP2; this interaction may be important for LAMP2 protein stability. In terms of tissue distribution, expressed in spermatozoa (at protein level).

The protein resides in the cytoplasm. Its subcellular location is the cytoplasmic vesicle. It localises to the secretory vesicle. The protein localises to the acrosome. It is found in the cell projection. The protein resides in the cilium. Its subcellular location is the flagellum. Its function is as follows. Plays a role in spermatogenesis, possibly acting in the regulation of the autophagy pathway. The protein is Cancer/testis antigen 55 (Ct55) of Mus musculus (Mouse).